A 644-amino-acid chain; its full sequence is uncharacterized protein (644 aa).

A disordered region spans residues 1–39; that stretch reads MKANGLDNDPARTRMERTDIDSEHPEAQPLLNNNHRTLG. The Cytoplasmic segment spans residues 1–90; the sequence is MKANGLDNDP…ILNILILINT (90 aa). Over residues 9–26 the composition is skewed to basic and acidic residues; it reads DPARTRMERTDIDSEHPE. A phosphoserine mark is found at serine 22, serine 56, and serine 63. A helical transmembrane segment spans residues 91–111; it reads IWLVTTLISDFFFNINILFGF. Residues 112-122 lie on the Vacuolar side of the membrane; the sequence is SNRYASFNDLT. The helical transmembrane segment at 123 to 143 threads the bilayer; that stretch reads LIFISIIANSFNLWFNKLGLY. Over 144–147 the chain is Cytoplasmic; sequence SALD. The helical transmembrane segment at 148–168 threads the bilayer; the sequence is YSLNVTLCVLTLFNLALTYLI. At 169–174 the chain is on the vacuolar side; it reads KYTRQR. A helical membrane pass occupies residues 175-195; that stretch reads IGFVGTFTYLWTSFSFFIGAI. Residues 196–271 are Cytoplasmic-facing; the sequence is LDWYLLFYNN…EWVSIGFRNT (76 aa). A disordered region spans residues 225–251; that stretch reads NENHTNSTENRDRSQYGSGSPTPTHRS. Residues 239-251 show a composition bias toward polar residues; that stretch reads QYGSGSPTPTHRS. The residue at position 244 (serine 244) is a Phosphoserine. A helical membrane pass occupies residues 272-292; sequence IKFLILIFFALFTLNTLLTTL. At 293-644 the chain is on the vacuolar side; the sequence is DTYRLTHKLP…IGELGKLTED (352 aa). Positions 348 to 619 constitute an AB hydrolase-1 domain; it reads PIILFEHGGY…IVEGGHEIYK (272 aa). A disordered region spans residues 469 to 492; it reads GRGDGDDGDDGNGNDGDGRNHDKT.

Its subcellular location is the vacuole membrane. This is an uncharacterized protein from Saccharomyces cerevisiae (strain YJM789) (Baker's yeast).